A 128-amino-acid chain; its full sequence is Glycine cleavage system H protein (128 aa).

Residues 22–104 (TVLVGITDYA…YGEGWIFRLK (83 aa)) enclose the Lipoyl-binding domain. Lys63 carries the N6-lipoyllysine modification.

Belongs to the GcvH family. As to quaternary structure, the glycine cleavage system is composed of four proteins: P, T, L and H. Monomer. The cofactor is (R)-lipoate.

In terms of biological role, the glycine cleavage system catalyzes the degradation of glycine. The H protein shuttles the methylamine group of glycine from the P protein to the T protein. The sequence is that of Glycine cleavage system H protein from Thermus thermophilus (strain ATCC 27634 / DSM 579 / HB8).